We begin with the raw amino-acid sequence, 120 residues long: Spermidine export protein MdtJ (120 aa).

The next 4 membrane-spanning stretches (helical) occupy residues 1–21 (MFYW…TLSM), 31–51 (AGYI…SFAV), 54–74 (IALG…ITVF), and 81–101 (EVLS…IVLI).

Belongs to the drug/metabolite transporter (DMT) superfamily. Small multidrug resistance (SMR) (TC 2.A.7.1) family. MdtJ subfamily. Forms a complex with MdtI.

It localises to the cell inner membrane. In terms of biological role, catalyzes the excretion of spermidine. The chain is Spermidine export protein MdtJ from Salmonella arizonae (strain ATCC BAA-731 / CDC346-86 / RSK2980).